Here is a 432-residue protein sequence, read N- to C-terminus: Adenosylhomocysteinase (432 aa).

The disordered stretch occupies residues 1-24 (MSAYSPLSAQLDADTDVDVESTRT). Substrate-binding residues include aspartate 137 and glutamate 162. Residue 163-165 (TTT) participates in NAD(+) binding. 2 residues coordinate substrate: lysine 192 and aspartate 196. Residues asparagine 197, 226–231 (GYGYCG), glutamate 249, asparagine 284, 305–307 (AGH), and asparagine 352 contribute to the NAD(+) site.

This sequence belongs to the adenosylhomocysteinase family. The cofactor is NAD(+).

It is found in the cytoplasm. The enzyme catalyses S-adenosyl-L-homocysteine + H2O = L-homocysteine + adenosine. The protein operates within amino-acid biosynthesis; L-homocysteine biosynthesis; L-homocysteine from S-adenosyl-L-homocysteine: step 1/1. In terms of biological role, may play a key role in the regulation of the intracellular concentration of adenosylhomocysteine. The polypeptide is Adenosylhomocysteinase (Haloquadratum walsbyi (strain DSM 16790 / HBSQ001)).